A 121-amino-acid chain; its full sequence is Small ribosomal subunit protein uS13 (121 aa).

Positions 94-121 (GLPLRGQRTRTNARTRKGPRRAAQSLKK) are disordered.

This sequence belongs to the universal ribosomal protein uS13 family. Part of the 30S ribosomal subunit. Forms a loose heterodimer with protein S19. Forms two bridges to the 50S subunit in the 70S ribosome.

In terms of biological role, located at the top of the head of the 30S subunit, it contacts several helices of the 16S rRNA. In the 70S ribosome it contacts the 23S rRNA (bridge B1a) and protein L5 of the 50S subunit (bridge B1b), connecting the 2 subunits; these bridges are implicated in subunit movement. Contacts the tRNAs in the A and P-sites. The sequence is that of Small ribosomal subunit protein uS13 from Paraburkholderia phymatum (strain DSM 17167 / CIP 108236 / LMG 21445 / STM815) (Burkholderia phymatum).